We begin with the raw amino-acid sequence, 735 residues long: Catalase-peroxidase (735 aa).

The tryptophyl-tyrosyl-methioninium (Trp-Tyr) (with M-249) cross-link spans 95 to 223 (WHSAGTYRTG…LAAVQMGLIY (129 aa)). His-96 (proton acceptor) is an active-site residue. A cross-link (tryptophyl-tyrosyl-methioninium (Tyr-Met) (with W-95)) is located at residues 223 to 249 (YVNPEGPDGVPDPIKSGIDIRETFARM). His-264 contributes to the heme b binding site.

The protein belongs to the peroxidase family. Peroxidase/catalase subfamily. As to quaternary structure, homodimer or homotetramer. Heme b serves as cofactor. Formation of the three residue Trp-Tyr-Met cross-link is important for the catalase, but not the peroxidase activity of the enzyme.

The catalysed reaction is H2O2 + AH2 = A + 2 H2O. It carries out the reaction 2 H2O2 = O2 + 2 H2O. Its function is as follows. Bifunctional enzyme with both catalase and broad-spectrum peroxidase activity. This Aliarcobacter butzleri (strain RM4018) (Arcobacter butzleri) protein is Catalase-peroxidase.